The primary structure comprises 384 residues: S-adenosylmethionine synthase (384 aa).

Histidine 15 lines the ATP pocket. Aspartate 17 is a Mg(2+) binding site. Position 43 (glutamate 43) interacts with K(+). L-methionine-binding residues include glutamate 56 and glutamine 99. Residues 99-109 (QSPDINQGVDR) are flexible loop. ATP is bound by residues 164 to 166 (DAK), 230 to 231 (RF), aspartate 239, 245 to 246 (RK), alanine 262, and lysine 266. L-methionine is bound at residue aspartate 239. Lysine 270 serves as a coordination point for L-methionine.

Belongs to the AdoMet synthase family. As to quaternary structure, homotetramer; dimer of dimers. Requires Mg(2+) as cofactor. K(+) serves as cofactor.

Its subcellular location is the cytoplasm. The enzyme catalyses L-methionine + ATP + H2O = S-adenosyl-L-methionine + phosphate + diphosphate. It functions in the pathway amino-acid biosynthesis; S-adenosyl-L-methionine biosynthesis; S-adenosyl-L-methionine from L-methionine: step 1/1. Functionally, catalyzes the formation of S-adenosylmethionine (AdoMet) from methionine and ATP. The overall synthetic reaction is composed of two sequential steps, AdoMet formation and the subsequent tripolyphosphate hydrolysis which occurs prior to release of AdoMet from the enzyme. The polypeptide is S-adenosylmethionine synthase (Edwardsiella ictaluri (strain 93-146)).